We begin with the raw amino-acid sequence, 445 residues long: N-succinylarginine dihydrolase (445 aa).

Substrate-binding positions include 19–28, Asn110, and 137–138; these read AGLSYGNVAS and HR. Residue Glu174 is part of the active site. Position 214 (Arg214) interacts with substrate. The active site involves His250. Substrate is bound by residues Asp252 and Asn363. Cys369 functions as the Nucleophile in the catalytic mechanism.

The protein belongs to the succinylarginine dihydrolase family. Homodimer.

It carries out the reaction N(2)-succinyl-L-arginine + 2 H2O + 2 H(+) = N(2)-succinyl-L-ornithine + 2 NH4(+) + CO2. The protein operates within amino-acid degradation; L-arginine degradation via AST pathway; L-glutamate and succinate from L-arginine: step 2/5. Its function is as follows. Catalyzes the hydrolysis of N(2)-succinylarginine into N(2)-succinylornithine, ammonia and CO(2). The chain is N-succinylarginine dihydrolase from Shewanella loihica (strain ATCC BAA-1088 / PV-4).